The sequence spans 179 residues: Large ribosomal subunit protein uL5 (179 aa).

This sequence belongs to the universal ribosomal protein uL5 family. In terms of assembly, part of the 50S ribosomal subunit; part of the 5S rRNA/L5/L18/L25 subcomplex. Contacts the 5S rRNA and the P site tRNA. Forms a bridge to the 30S subunit in the 70S ribosome.

This is one of the proteins that bind and probably mediate the attachment of the 5S RNA into the large ribosomal subunit, where it forms part of the central protuberance. In the 70S ribosome it contacts protein S13 of the 30S subunit (bridge B1b), connecting the 2 subunits; this bridge is implicated in subunit movement. Contacts the P site tRNA; the 5S rRNA and some of its associated proteins might help stabilize positioning of ribosome-bound tRNAs. The chain is Large ribosomal subunit protein uL5 from Agathobacter rectalis (strain ATCC 33656 / DSM 3377 / JCM 17463 / KCTC 5835 / VPI 0990) (Eubacterium rectale).